A 930-amino-acid chain; its full sequence is Serine/threonine-protein kinase ATG1 (930 aa).

The Protein kinase domain maps to 23-326 (FIIDREIGKG…FENFFAHHVV (304 aa)). Residues 29–37 (IGKGSFAQV) and Lys52 contribute to the ATP site. Residue Asp166 is the Proton acceptor of the active site. 4 disordered regions span residues 336 to 468 (DDIP…TEEE), 504 to 563 (GQNN…SASP), 853 to 874 (ISSG…DTEE), and 904 to 930 (NQAK…YGST). Residues 337–350 (DIPKPPKRELETIR) show a composition bias toward basic and acidic residues. Residues 377–393 (SPKSPRSSPRSSTVNSS) show a composition bias toward low complexity. Composition is skewed to polar residues over residues 400 to 417 (RQSQ…HNSG) and 504 to 531 (GQNN…TTGA). The interval 629-897 (AAQAIEEFAT…RLNMVRKKQQ (269 aa)) is ATG13-binding.

This sequence belongs to the protein kinase superfamily. Ser/Thr protein kinase family. APG1/unc-51/ULK1 subfamily. Homodimer. Dimerization requires the presence of ATG13. Forms a ternary complex with ATG13 and ATG17.

It is found in the cytoplasm. The protein resides in the preautophagosomal structure membrane. It catalyses the reaction L-seryl-[protein] + ATP = O-phospho-L-seryl-[protein] + ADP + H(+). It carries out the reaction L-threonyl-[protein] + ATP = O-phospho-L-threonyl-[protein] + ADP + H(+). Functionally, serine/threonine protein kinase involved in the cytoplasm to vacuole transport (Cvt) and found to be essential in autophagy, where it is required for the formation of autophagosomes. Involved in the clearance of protein aggregates which cannot be efficiently cleared by the proteasome. Required for selective autophagic degradation of the nucleus (nucleophagy) as well as for mitophagy which contributes to regulate mitochondrial quantity and quality by eliminating the mitochondria to a basal level to fulfill cellular energy requirements and preventing excess ROS production. Also involved in endoplasmic reticulum-specific autophagic process, in selective removal of ER-associated degradation (ERAD) substrates. Plays a key role in ATG9 and ATG23 cycling through the pre-autophagosomal structure and is necessary to promote ATG18 binding to ATG9 through phosphorylation of ATG9. Catalyzes phosphorylation of ATG4, decreasing the interaction between ATG4 and ATG8 and impairing deconjugation of PE-conjugated forms of ATG8. Contributes to conidiation by regulating the conidial levels of the conidiation-related protein CP15 and mediates fungal oxidation resistance by controlling total superoxide dismutase (SOD) activity. This chain is Serine/threonine-protein kinase ATG1, found in Beauveria bassiana (strain ARSEF 2860) (White muscardine disease fungus).